The sequence spans 529 residues: Glycylpeptide N-tetradecanoyltransferase 2 (529 aa).

Positions 1-82 are disordered; the sequence is MAEDSESAAS…QEIKIQQSSK (82 aa). The span at 15 to 32 shows a compositional bias: acidic residues; the sequence is ELDDQDTCGIDGDNEEET. The residue at position 38 (Ser38) is a Phosphoserine. Over residues 46-57 the composition is skewed to basic residues; the sequence is KKKKKKQKRKKE. Residues 61 to 82 are compositionally biased toward polar residues; sequence SGGTKSDSASDSQEIKIQQSSK. Tetradecanoyl-CoA-binding residues include Trp153, Leu281, Val283, Ser289, Arg291, Val292, and Ala293.

Belongs to the NMT family.

The protein localises to the cytoplasm. The protein resides in the membrane. It catalyses the reaction N-terminal glycyl-[protein] + tetradecanoyl-CoA = N-tetradecanoylglycyl-[protein] + CoA + H(+). The enzyme catalyses N-terminal glycyl-L-lysyl-[protein] + tetradecanoyl-CoA = N-terminal glycyl-(N(6)-tetradecanoyl)-L-lysyl-[protein] + CoA + H(+). Functionally, adds a myristoyl group to the N-terminal glycine residue of certain cellular and viral proteins. Also able to mediate N-terminal lysine myristoylation of proteins: catalyzes myristoylation of ARF6 on both 'Gly-2' and 'Lys-3'. Lysine myristoylation is required to maintain ARF6 on membranes during the GTPase cycle. The polypeptide is Glycylpeptide N-tetradecanoyltransferase 2 (Nmt2) (Mus musculus (Mouse)).